The primary structure comprises 404 residues: uncharacterized protein (404 aa).

Positions methionine 1 to glycine 21 are cleaved as a signal peptide. Cysteine 22 carries the N-acetylcysteine modification. Cysteine 22 carries the S-archaeol cysteine lipid modification.

It belongs to the BMP lipoprotein family.

It is found in the cell membrane. This is an uncharacterized protein from Pyrococcus abyssi (strain GE5 / Orsay).